Reading from the N-terminus, the 205-residue chain is Holliday junction branch migration complex subunit RuvA (205 aa).

The tract at residues 1 to 67 (MIGWLKGDVQ…ADNLQLFGFL (67 aa)) is domain I. The segment at 68-146 (QLAERDLFRE…DSVASTGPER (79 aa)) is domain II. Residues 147–155 (NQLDPVAPD) are flexible linker. Positions 155-205 (DLIATLETLGFETHEIRDALQRLNGMGGPQDGDDDDAWLRACIKLMSSTDP) are domain III.

The protein belongs to the RuvA family. As to quaternary structure, homotetramer. Forms an RuvA(8)-RuvB(12)-Holliday junction (HJ) complex. HJ DNA is sandwiched between 2 RuvA tetramers; dsDNA enters through RuvA and exits via RuvB. An RuvB hexamer assembles on each DNA strand where it exits the tetramer. Each RuvB hexamer is contacted by two RuvA subunits (via domain III) on 2 adjacent RuvB subunits; this complex drives branch migration. In the full resolvosome a probable DNA-RuvA(4)-RuvB(12)-RuvC(2) complex forms which resolves the HJ.

Its subcellular location is the cytoplasm. Functionally, the RuvA-RuvB-RuvC complex processes Holliday junction (HJ) DNA during genetic recombination and DNA repair, while the RuvA-RuvB complex plays an important role in the rescue of blocked DNA replication forks via replication fork reversal (RFR). RuvA specifically binds to HJ cruciform DNA, conferring on it an open structure. The RuvB hexamer acts as an ATP-dependent pump, pulling dsDNA into and through the RuvAB complex. HJ branch migration allows RuvC to scan DNA until it finds its consensus sequence, where it cleaves and resolves the cruciform DNA. The protein is Holliday junction branch migration complex subunit RuvA of Parasynechococcus marenigrum (strain WH8102).